A 716-amino-acid chain; its full sequence is DEAD-box ATP-dependent RNA helicase 31 (716 aa).

Residues 99–188 (GILKSDDEDE…LRLEDESSDE (90 aa)) are disordered. Positions 110-121 (DRSRGRNQEKRG) are enriched in basic and acidic residues. Over residues 144–153 (SRIQGKSSEA) the composition is skewed to polar residues. The segment covering 155–188 (FRGRKETSFSRDREDEKGLRKREDLRLEDESSDE) has biased composition (basic and acidic residues). The Q motif signature appears at 248 to 276 (TRFDHYPLSPLSLKAIKDAGYETMTVVQE). Positions 279 to 462 (LPIILKGKDV…LVALRRDHEF (184 aa)) constitute a Helicase ATP-binding domain. 292–299 (AKTGTGKT) serves as a coordination point for ATP. The short motif at 410 to 413 (DEAD) is the DEAD box element. In terms of domain architecture, Helicase C-terminal spans 497 to 643 (LREHIMGNVD…IDPETVKKVQ (147 aa)).

It belongs to the DEAD box helicase family.

It carries out the reaction ATP + H2O = ADP + phosphate + H(+). The polypeptide is DEAD-box ATP-dependent RNA helicase 31 (RH31) (Arabidopsis thaliana (Mouse-ear cress)).